A 266-amino-acid chain; its full sequence is Phosphate import ATP-binding protein PstB 1 (266 aa).

The ABC transporter domain occupies 18–261; it reads AQTSNLSFYY…PTNQLTEQYV (244 aa). 50–57 lines the ATP pocket; it reads GPSGCGKT.

This sequence belongs to the ABC transporter superfamily. Phosphate importer (TC 3.A.1.7) family. As to quaternary structure, the complex is composed of two ATP-binding proteins (PstB), two transmembrane proteins (PstC and PstA) and a solute-binding protein (PstS).

The protein resides in the cell inner membrane. It catalyses the reaction phosphate(out) + ATP + H2O = ADP + 2 phosphate(in) + H(+). Functionally, part of the ABC transporter complex PstSACB involved in phosphate import. Responsible for energy coupling to the transport system. The sequence is that of Phosphate import ATP-binding protein PstB 1 from Gloeobacter violaceus (strain ATCC 29082 / PCC 7421).